Reading from the N-terminus, the 651-residue chain is Threonine--tRNA ligase (651 aa).

The TGS domain maps to 1 to 61 (MIKITFPDNS…NDDATVKLLK (61 aa)). Residues 242–541 (DHRKIGKEMD…LIEHTAGKFP (300 aa)) form a catalytic region. Zn(2+)-binding residues include Cys-337, His-388, and His-518.

Belongs to the class-II aminoacyl-tRNA synthetase family. Homodimer. The cofactor is Zn(2+).

It is found in the cytoplasm. It carries out the reaction tRNA(Thr) + L-threonine + ATP = L-threonyl-tRNA(Thr) + AMP + diphosphate + H(+). Functionally, catalyzes the attachment of threonine to tRNA(Thr) in a two-step reaction: L-threonine is first activated by ATP to form Thr-AMP and then transferred to the acceptor end of tRNA(Thr). Also edits incorrectly charged L-seryl-tRNA(Thr). The chain is Threonine--tRNA ligase from Parabacteroides distasonis (strain ATCC 8503 / DSM 20701 / CIP 104284 / JCM 5825 / NCTC 11152).